Reading from the N-terminus, the 330-residue chain is MKTLPLAVPHMSQDEAEEVFGWILDGEASEEEIARFLLAMTERSETADEIAGAARALRDRLIPVEAPEGAVDCCGTGGDGHHTLNVSTAVSLVVAAAGVPVAKHGNRAASSKSGAADTLEALGLDMEAVGRTAEKTLAEIGICFLFAKNHHPAMGRIQPIRQRLGKRTIFNLMGPLSNPAGVKRQLIGIARPGYVPIYAEAKAKLGTERTYIVSGDEGLDELSLAGGNELADVCGNEFEMRRVYAEMIGLPHAPVEAIRGGDAAHNAMALKALLEGTPGPYRDAVVFNAAATLMAAGAVEDWEVGAAMAVESLDSGKANELLGKWIEMAV.

5-phospho-alpha-D-ribose 1-diphosphate contacts are provided by residues G75, 78–79 (GD), T83, 85–88 (NVST), 103–111 (KHGNRAASS), and A115. Residue G75 participates in anthranilate binding. Residue S87 coordinates Mg(2+). N106 contacts anthranilate. R161 provides a ligand contact to anthranilate. Mg(2+) is bound by residues D220 and E221.

Belongs to the anthranilate phosphoribosyltransferase family. As to quaternary structure, homodimer. Requires Mg(2+) as cofactor.

The catalysed reaction is N-(5-phospho-beta-D-ribosyl)anthranilate + diphosphate = 5-phospho-alpha-D-ribose 1-diphosphate + anthranilate. It participates in amino-acid biosynthesis; L-tryptophan biosynthesis; L-tryptophan from chorismate: step 2/5. Its function is as follows. Catalyzes the transfer of the phosphoribosyl group of 5-phosphorylribose-1-pyrophosphate (PRPP) to anthranilate to yield N-(5'-phosphoribosyl)-anthranilate (PRA). The polypeptide is Anthranilate phosphoribosyltransferase (Erythrobacter litoralis (strain HTCC2594)).